Consider the following 455-residue polypeptide: Bifunctional protein GlmU (455 aa).

A pyrophosphorylase region spans residues 1–228 (MYKCALVLAA…FEETIGVNSR (228 aa)). UDP-N-acetyl-alpha-D-glucosamine-binding positions include 8–11 (LAAG), lysine 22, glutamine 73, and 78–79 (GT). A Mg(2+)-binding site is contributed by aspartate 103. UDP-N-acetyl-alpha-D-glucosamine-binding residues include glycine 140, glutamate 154, asparagine 169, and asparagine 226. Asparagine 226 lines the Mg(2+) pocket. A linker region spans residues 229 to 249 (AQLAQAEEILKDRINLKHMEN). The tract at residues 250-455 (GVTLIDPKTT…GWVDKKGLKK (206 aa)) is N-acetyltransferase. Positions 331 and 349 each coordinate UDP-N-acetyl-alpha-D-glucosamine. The active-site Proton acceptor is histidine 361. UDP-N-acetyl-alpha-D-glucosamine is bound by residues tyrosine 364 and asparagine 375. Acetyl-CoA is bound by residues 384-385 (NY), alanine 421, and arginine 438.

It in the N-terminal section; belongs to the N-acetylglucosamine-1-phosphate uridyltransferase family. This sequence in the C-terminal section; belongs to the transferase hexapeptide repeat family. In terms of assembly, homotrimer. Requires Mg(2+) as cofactor.

It is found in the cytoplasm. The catalysed reaction is alpha-D-glucosamine 1-phosphate + acetyl-CoA = N-acetyl-alpha-D-glucosamine 1-phosphate + CoA + H(+). It carries out the reaction N-acetyl-alpha-D-glucosamine 1-phosphate + UTP + H(+) = UDP-N-acetyl-alpha-D-glucosamine + diphosphate. Its pathway is nucleotide-sugar biosynthesis; UDP-N-acetyl-alpha-D-glucosamine biosynthesis; N-acetyl-alpha-D-glucosamine 1-phosphate from alpha-D-glucosamine 6-phosphate (route II): step 2/2. The protein operates within nucleotide-sugar biosynthesis; UDP-N-acetyl-alpha-D-glucosamine biosynthesis; UDP-N-acetyl-alpha-D-glucosamine from N-acetyl-alpha-D-glucosamine 1-phosphate: step 1/1. It functions in the pathway bacterial outer membrane biogenesis; LPS lipid A biosynthesis. Catalyzes the last two sequential reactions in the de novo biosynthetic pathway for UDP-N-acetylglucosamine (UDP-GlcNAc). The C-terminal domain catalyzes the transfer of acetyl group from acetyl coenzyme A to glucosamine-1-phosphate (GlcN-1-P) to produce N-acetylglucosamine-1-phosphate (GlcNAc-1-P), which is converted into UDP-GlcNAc by the transfer of uridine 5-monophosphate (from uridine 5-triphosphate), a reaction catalyzed by the N-terminal domain. The protein is Bifunctional protein GlmU of Clostridium botulinum (strain Eklund 17B / Type B).